The following is a 403-amino-acid chain: D-mannonate dehydratase (403 aa).

The substrate site is built by Asn38 and His123. Tyr160 serves as the catalytic Proton donor/acceptor. Asp211 contributes to the Mg(2+) binding site. His213 functions as the Proton donor/acceptor in the catalytic mechanism. Mg(2+) is bound by residues Glu237 and Glu263. Positions 263, 284, 313, 317, and 340 each coordinate substrate.

Belongs to the mandelate racemase/muconate lactonizing enzyme family. GalD subfamily. It depends on Mg(2+) as a cofactor.

It catalyses the reaction D-mannonate = 2-dehydro-3-deoxy-D-gluconate + H2O. Its pathway is carbohydrate metabolism; pentose and glucuronate interconversion. In terms of biological role, catalyzes the dehydration of D-mannonate. Has no detectable activity with a panel of 70 other acid sugars (in vitro). The sequence is that of D-mannonate dehydratase from Sphingomonas sp. (strain SKA58).